The sequence spans 476 residues: Rab-3A-interacting protein (476 aa).

Phosphoserine; by PKB/AKT1 occurs at positions 163 and 165. The stretch at 165-260 forms a coiled coil; it reads SVLEVREKGY…EVAALKTLVL (96 aa). The tract at residues 262–297 is disordered; sequence SSPTSPTQEPLPGGKTPFKKGHTRNKSTSSAMSGSH. Phosphoserine is present on residues S263, S266, S288, and S296. Over residues 287 to 297 the composition is skewed to polar residues; sequence KSTSSAMSGSH. Positions 435-444 are important for RAB11A binding; that stretch reads TYIRYIQQGL.

It belongs to the SEC2 family. Homodimer. Interacts with the N-terminal region of SSX2. Interacts with the GDP-bound forms of RAB8A and RAB8B. The interaction with RAB8A is prevented by phosphorylation of RAB8A at 'Thr-72'. Interacts with the GDP-bound forms of RAB3A and RAB3D. Interacts with DCDC1. Interacts (via the N-terminal region) with TRAPPC14; this interaction mediates RAB3IP association with the TRAPP II complex. Forms a heterotetramer with RAB11A where RAB3IP homodimer binds two RAB11A subunits. Forms a complex with RAB11A and RAB11FIP3, probably a heterohexamer with two of each protein subunit, where Rabin8/RAB3IP and RAB11FIP3 simultaneously bind to RAB11A; the complex promotes preciliary trafficking. Forms a complex containing RAB11A, ASAP1, RAB3IP, RAP11FIP3 and ARF4; the complex promotes preciliary trafficking; the complex binds to RHO in photoreceptor cells and promotes RHO ciliary transport. Post-translationally, phosphorylated by AKT1; the phosphorylation alters its GEF activity. In terms of tissue distribution, expressed in brain, kidney, heart, pancreas and placenta. Not detected in skeletal muscle or liver.

The protein localises to the cytoplasm. The protein resides in the nucleus. Its subcellular location is the cytoskeleton. It localises to the cell projection. It is found in the lamellipodium. The protein localises to the vesicle. The protein resides in the microtubule organizing center. Its subcellular location is the centrosome. With respect to regulation, phosphorylation by ATK1 alters its GEF activity. Complex formation with RAB11A and RAB11FIP3 and ciliogenesis function are competitively inhibited by RAB11A-WDR44 interaction. Its function is as follows. Guanine nucleotide exchange factor (GEF) which may activate RAB8A and RAB8B. Promotes the exchange of GDP to GTP, converting inactive GDP-bound Rab proteins into their active GTP-bound form. Mediates the release of GDP from RAB8A and RAB8B but not from RAB3A or RAB5. Modulates actin organization and promotes polarized transport of RAB8A-specific vesicles to the cell surface. Together with RAB11A, RAB8A, the exocyst complex, PARD3, PRKCI, ANXA2, CDC42 and DNMBP promotes transcytosis of PODXL to the apical membrane initiation sites (AMIS), apical surface formation and lumenogenesis. Part of the ciliary targeting complex containing Rab11, ASAP1, RAB3IP and RAB11FIP3 and ARF4 that promotes RAB3IP preciliary vesicle trafficking to mother centriole and ciliogenesis initiation. This Homo sapiens (Human) protein is Rab-3A-interacting protein.